Consider the following 582-residue polypeptide: TRAF-type zinc finger domain-containing protein 1 (582 aa).

N-acetylalanine is present on alanine 2. The TRAF-type zinc finger occupies 27 to 103 (IHEIHCQRNI…DLELSILKLK (77 aa)). Serine 191 bears the Phosphoserine mark. The interval 216–238 (EEQERQERNRGQQPPKEGGEDGA) is disordered. 8 positions are modified to phosphoserine: serine 278, serine 320, serine 326, serine 327, serine 409, serine 415, serine 430, and serine 470. Disordered stretches follow at residues 402–509 (EGIP…IAPG) and 522–582 (PENI…EEEE). Polar residues-rich tracts occupy residues 454–471 (PFNN…STSG) and 486–504 (LNNS…SQNG).

In terms of assembly, interacts with MAVS, TICAM1, TRAF1, TRAF2, TRAF3 and TRAF6.

Its function is as follows. Negative feedback regulator that controls excessive innate immune responses. Regulates both Toll-like receptor 4 (TLR4) and DDX58/RIG1-like helicases (RLH) pathways. May inhibit the LTR pathway by direct interaction with TRAF6 and attenuation of NF-kappa-B activation. May negatively regulate the RLH pathway downstream from MAVS and upstream of NF-kappa-B and IRF3. The chain is TRAF-type zinc finger domain-containing protein 1 (TRAFD1) from Macaca fascicularis (Crab-eating macaque).